A 153-amino-acid chain; its full sequence is ORM1-like protein 2 (153 aa).

Residues 1 to 21 lie on the Cytoplasmic side of the membrane; it reads MNVGVAHSEVNPNTRVMNSRG. 2 helical membrane passes run 22-42 and 43-63; these read IWLAYIILVGLLHVVLLSIPF and FSIPVVWTLTNVIHNLAMYIF. The Cytoplasmic segment spans residues 64-105; the sequence is LHTVKGTPFETPDQGKARLLTHWEQMDYGLQFTSSRKFLSIS. The helical transmembrane segment at 106–126 threads the bilayer; the sequence is PIVLYLLASFYTKYDAAHFLI. The Extracellular segment spans residues 127 to 153; it reads NTASLLSVLLPKLPQFHGVRLFGINKY.

Belongs to the ORM family. In terms of assembly, ceramide-sensitive subunit of the serine palmitoyltransferase (SPT) complex, which is also composed of SPTLC1, SPTLC2/3 and SPTSSA/B.

Its subcellular location is the endoplasmic reticulum membrane. Plays an essential role in the homeostatic regulation of sphingolipid de novo biosynthesis by modulating the activity of the serine palmitoyltransferase (SPT) in response to ceramide levels. When complexed to SPT, the binding of ceramides to its N-terminus stabilizes a conformation that block SPT substrate entry, hence preventing SPT catalytic activity. Through this mechanism, maintains ceramide levels at sufficient concentrations for the production of complex sphingolipids, but which prevents the accumulation of ceramides to levels that trigger apoptosis. This is ORM1-like protein 2 (Ormdl2) from Mus musculus (Mouse).